The chain runs to 183 residues: GTP cyclohydrolase 1 (183 aa).

The Zn(2+) site is built by Cys-71, His-74, and Cys-142.

It belongs to the GTP cyclohydrolase I family. In terms of assembly, toroid-shaped homodecamer, composed of two pentamers of five dimers.

It catalyses the reaction GTP + H2O = 7,8-dihydroneopterin 3'-triphosphate + formate + H(+). The protein operates within cofactor biosynthesis; 7,8-dihydroneopterin triphosphate biosynthesis; 7,8-dihydroneopterin triphosphate from GTP: step 1/1. The polypeptide is GTP cyclohydrolase 1 (Leptospira interrogans serogroup Icterohaemorrhagiae serovar copenhageni (strain Fiocruz L1-130)).